The following is a 343-amino-acid chain: Methionine import ATP-binding protein MetN (343 aa).

The region spanning 2–241 is the ABC transporter domain; that stretch reads IKLFHINKIF…PKTPIAQAFI (240 aa). 38 to 45 serves as a coordination point for ATP; sequence GSSGAGKS.

The protein belongs to the ABC transporter superfamily. Methionine importer (TC 3.A.1.24) family. In terms of assembly, the complex is composed of two ATP-binding proteins (MetN), two transmembrane proteins (MetI) and a solute-binding protein (MetQ).

It localises to the cell inner membrane. The enzyme catalyses L-methionine(out) + ATP + H2O = L-methionine(in) + ADP + phosphate + H(+). It carries out the reaction D-methionine(out) + ATP + H2O = D-methionine(in) + ADP + phosphate + H(+). Functionally, part of the ABC transporter complex MetNIQ involved in methionine import. Responsible for energy coupling to the transport system. The sequence is that of Methionine import ATP-binding protein MetN from Photorhabdus laumondii subsp. laumondii (strain DSM 15139 / CIP 105565 / TT01) (Photorhabdus luminescens subsp. laumondii).